The chain runs to 118 residues: Holo-[acyl-carrier-protein] synthase (118 aa).

Mg(2+) contacts are provided by aspartate 8 and glutamate 58.

Belongs to the P-Pant transferase superfamily. AcpS family. Requires Mg(2+) as cofactor.

It is found in the cytoplasm. The catalysed reaction is apo-[ACP] + CoA = holo-[ACP] + adenosine 3',5'-bisphosphate + H(+). Functionally, transfers the 4'-phosphopantetheine moiety from coenzyme A to a Ser of acyl-carrier-protein. The sequence is that of Holo-[acyl-carrier-protein] synthase from Streptococcus equi subsp. zooepidemicus (strain MGCS10565).